A 56-amino-acid chain; its full sequence is MKRDLIGPVKALIKINNCSCLSRCQISRLPHFFTFHPHFSTLIYYYNLKNCITSET.

This is an uncharacterized protein from Saccharomyces cerevisiae (strain ATCC 204508 / S288c) (Baker's yeast).